A 342-amino-acid polypeptide reads, in one-letter code: MTKSLFRQSFLTDTLDVHIDVAPAEQVLSNGVKLKLYQRGVLEVIPEEYTQETKNVIISCGVHGDETAPMELVDSIIKDIESGFQKVEARCLFIIAHPESTLAHSRFLEENLNRLFDEKEHEPTKELAIADTLKLLVRDFYQDTAAETRWHLDLHCAIRASKHYTFAVSPKTRHPVRSKALIDFLDSAHIEAVLLSNSPTSTFSWFSAENYGAQALTMELGRVARIGENDLDKLTAFDLSLRNLIAESKAEHLSKPCIKYRVSRTIVRLHEDFDFMFDDNVENFTSFVHGEVFGHDGDKPLMAKNDNEAVVFPNRHVAIGQRAALMVCEVKTRYEDGELVYD.

Zn(2+) contacts are provided by H63, E66, and H155. Residue E219 is part of the active site.

The protein belongs to the AspA/AstE family. Succinylglutamate desuccinylase subfamily. It depends on Zn(2+) as a cofactor.

The catalysed reaction is N-succinyl-L-glutamate + H2O = L-glutamate + succinate. It participates in amino-acid degradation; L-arginine degradation via AST pathway; L-glutamate and succinate from L-arginine: step 5/5. Its function is as follows. Transforms N(2)-succinylglutamate into succinate and glutamate. This Vibrio campbellii (strain ATCC BAA-1116) protein is Succinylglutamate desuccinylase.